Here is a 504-residue protein sequence, read N- to C-terminus: L-carnitine/gamma-butyrobetaine antiporter (504 aa).

The next 12 helical transmembrane spans lie at 10-30 (IEPK…WLTV), 51-71 (WGWA…WLVF), 92-112 (IFMM…SIEI), 143-163 (GPLP…FFFV), 195-215 (FYLV…TPLV), 231-251 (LDAI…ACGL), 263-283 (SYLS…SFIM), 316-336 (WTVF…IFLA), 347-367 (LCFG…TVLG), 398-418 (WAAL…CFIA), 446-466 (LLVR…LLAL), and 475-495 (AIIA…LSFI).

This sequence belongs to the BCCT transporter (TC 2.A.15) family. CaiT subfamily. As to quaternary structure, homotrimer.

The protein localises to the cell inner membrane. It catalyses the reaction 4-(trimethylamino)butanoate(in) + (R)-carnitine(out) = 4-(trimethylamino)butanoate(out) + (R)-carnitine(in). Its pathway is amine and polyamine metabolism; carnitine metabolism. Functionally, catalyzes the exchange of L-carnitine for gamma-butyrobetaine. In Escherichia coli O8 (strain IAI1), this protein is L-carnitine/gamma-butyrobetaine antiporter.